Reading from the N-terminus, the 217-residue chain is Casparian strip membrane protein 6 (217 aa).

Residues 1-57 (MEEAKHIEAVEAKQIEAEEAQRIKAGEAKQIEAGETSRSSRKVITFEPKLVINKGIS) are Cytoplasmic-facing. Residues 58–78 (VLGFVLRLFAVFGTIGSALAM) traverse the membrane as a helical segment. The Extracellular portion of the chain corresponds to 79–103 (GTTHESVVSLSQLVLLKVKYSDLPT). A helical transmembrane segment spans residues 104–124 (LMFFVVANAIAGGYLVLSLPV). Residues 125-138 (SIFHIFSTKAKTSR) are Cytoplasmic-facing. The helical transmembrane segment at 139 to 159 (IILLVIDTVMLALVSSGASAA) threads the bilayer. Residues 160 to 191 (TATVYLAHEGNTTANWPPICQQFDGFCERISG) lie on the Extracellular side of the membrane. Asparagine 170 carries N-linked (GlcNAc...) asparagine glycosylation. The helical transmembrane segment at 192-212 (SLIGSFCAVILLMLIVINSAI) threads the bilayer. The Cytoplasmic portion of the chain corresponds to 213–217 (SLSRH).

It belongs to the Casparian strip membrane proteins (CASP) family. As to quaternary structure, homodimer and heterodimers.

It localises to the cell membrane. Functionally, regulates membrane-cell wall junctions and localized cell wall deposition. Required for establishment of the Casparian strip membrane domain (CSD) and the subsequent formation of Casparian strips, a cell wall modification of the root endodermis that determines an apoplastic barrier between the intraorganismal apoplasm and the extraorganismal apoplasm and prevents lateral diffusion. In Arabidopsis lyrata subsp. lyrata (Lyre-leaved rock-cress), this protein is Casparian strip membrane protein 6.